Consider the following 169-residue polypeptide: Ribosome-binding factor A (169 aa).

The tract at residues 124 to 169 is disordered; sequence AGAKHAGDADPYKSDIPEDVEIDEDDFDEEDEDLIDDEELDEDGNK. The span at 128–139 shows a compositional bias: basic and acidic residues; the sequence is HAGDADPYKSDI. Residues 140 to 169 are compositionally biased toward acidic residues; it reads PEDVEIDEDDFDEEDEDLIDDEELDEDGNK.

Belongs to the RbfA family. In terms of assembly, monomer. Binds 30S ribosomal subunits, but not 50S ribosomal subunits or 70S ribosomes.

Its subcellular location is the cytoplasm. One of several proteins that assist in the late maturation steps of the functional core of the 30S ribosomal subunit. Associates with free 30S ribosomal subunits (but not with 30S subunits that are part of 70S ribosomes or polysomes). Required for efficient processing of 16S rRNA. May interact with the 5'-terminal helix region of 16S rRNA. This is Ribosome-binding factor A from Arthrobacter sp. (strain FB24).